The primary structure comprises 228 residues: Derlin-3 (228 aa).

Residues 1–22 (MAGQRLAAGFLQVPAVTRAYTA) lie on the Cytoplasmic side of the membrane. Residues 23-43 (ACVLTTAAVQLELLSPFQLYF) form a helical membrane-spanning segment. Residues 44-57 (NPHLVFRKFQVWRL) are Lumenal-facing. A helical membrane pass occupies residues 58–78 (ITTFLFFGPLGFGFFFNMLFV). The Cytoplasmic portion of the chain corresponds to 79 to 98 (FRYCRMLEEGSFRGRKADFV). The chain crosses the membrane as a helical span at residues 99–119 (FMFLFGGVLMTLLGFLGSLFF). Residues 120–168 (LGQALMAMLVYVWSRRSPHVRVNFFGLLNFQAPFLPWALMGFSLLLGNS) are Lumenal-facing. Residues 169–189 (VVTDLLGILVGHIYYFLEDVF) form a helical membrane-spanning segment. The Cytoplasmic portion of the chain corresponds to 190–228 (PNQPGGKRLLLTPSVLKLLLDDPQEDPDYLPLPEEQPEL).

It belongs to the derlin family. Forms homo- and heterooligomers with DERL2 and, to a lesser extent, with DERL1. Interacts with VCP and EDEM1. Interacts with SELENOK and SELENOS. Interacts with the signal recognition particle/SRP and the SRP receptor; in the process of endoplasmic reticulum stress-induced pre-emptive quality control. Highly expressed in spleen, lung, liver, spleen and testis. Expressed at intermediate level in kidney. Weakly or not expressed in brain, heart and skeletal muscle.

The protein localises to the endoplasmic reticulum membrane. Its function is as follows. Functional component of endoplasmic reticulum-associated degradation (ERAD) for misfolded lumenal glycoproteins, but not that of misfolded nonglycoproteins. May act by forming a channel that allows the retrotranslocation of misfolded glycoproteins into the cytosol where they are ubiquitinated and degraded by the proteasome. May mediate the interaction between VCP and the misfolded glycoproteins. May be involved in endoplasmic reticulum stress-induced pre-emptive quality control, a mechanism that selectively attenuates the translocation of newly synthesized proteins into the endoplasmic reticulum and reroutes them to the cytosol for proteasomal degradation. This is Derlin-3 from Mus musculus (Mouse).